The following is a 66-amino-acid chain: Large ribosomal subunit protein bL35 (66 aa).

It belongs to the bacterial ribosomal protein bL35 family.

The polypeptide is Large ribosomal subunit protein bL35 (Ruegeria sp. (strain TM1040) (Silicibacter sp.)).